The sequence spans 344 residues: Anthranilate phosphoribosyltransferase (344 aa).

Residues Gly86, 89–90 (GD), Thr94, 96–99 (NIST), 114–122 (KHGNKSASG), and Ser126 each bind 5-phospho-alpha-D-ribose 1-diphosphate. Residue Gly86 coordinates anthranilate. Ser98 serves as a coordination point for Mg(2+). Residue Asn117 participates in anthranilate binding. Arg172 contributes to the anthranilate binding site. Mg(2+) contacts are provided by Asp231 and Glu232.

This sequence belongs to the anthranilate phosphoribosyltransferase family. Homodimer. Mg(2+) is required as a cofactor.

It catalyses the reaction N-(5-phospho-beta-D-ribosyl)anthranilate + diphosphate = 5-phospho-alpha-D-ribose 1-diphosphate + anthranilate. The protein operates within amino-acid biosynthesis; L-tryptophan biosynthesis; L-tryptophan from chorismate: step 2/5. Its function is as follows. Catalyzes the transfer of the phosphoribosyl group of 5-phosphorylribose-1-pyrophosphate (PRPP) to anthranilate to yield N-(5'-phosphoribosyl)-anthranilate (PRA). In Prochlorococcus marinus (strain MIT 9215), this protein is Anthranilate phosphoribosyltransferase.